The sequence spans 107 residues: Mitochondrial pyruvate carrier 1 (107 aa).

Transmembrane regions (helical) follow at residues 18 to 39 (YFMS…AALA) and 52 to 68 (MTLA…RFAY).

This sequence belongs to the mitochondrial pyruvate carrier (MPC) (TC 2.A.105) family. The functional 150 kDa pyruvate import complex is a heteromer of MPC1 and MPC2.

It is found in the mitochondrion inner membrane. In terms of biological role, mediates the uptake of pyruvate into mitochondria. This is Mitochondrial pyruvate carrier 1 (Mpc1) from Drosophila melanogaster (Fruit fly).